The sequence spans 99 residues: DNA-binding protein HU (99 aa).

Residues 63-82 (HRKEREGRNPKTGAKMKIDA) form a disordered region.

It belongs to the bacterial histone-like protein family. As to quaternary structure, homodimer.

Its function is as follows. Histone-like DNA-binding protein which is capable of wrapping DNA to stabilize it, and thus to prevent its denaturation under extreme environmental conditions. In Rickettsia prowazekii (strain Madrid E), this protein is DNA-binding protein HU (hup).